The primary structure comprises 229 residues: Triosephosphate isomerase (229 aa).

16–18 (NFK) serves as a coordination point for substrate. His100 acts as the Electrophile in catalysis. Glu148 acts as the Proton acceptor in catalysis. Residues Ile153, Gly188, and 209–210 (AS) each bind substrate.

Belongs to the triosephosphate isomerase family. As to quaternary structure, homotetramer; dimer of dimers.

It localises to the cytoplasm. The catalysed reaction is D-glyceraldehyde 3-phosphate = dihydroxyacetone phosphate. Its pathway is carbohydrate biosynthesis; gluconeogenesis. It participates in carbohydrate degradation; glycolysis; D-glyceraldehyde 3-phosphate from glycerone phosphate: step 1/1. Its function is as follows. Involved in the gluconeogenesis. Catalyzes stereospecifically the conversion of dihydroxyacetone phosphate (DHAP) to D-glyceraldehyde-3-phosphate (G3P). The polypeptide is Triosephosphate isomerase (Methanothermobacter thermautotrophicus (strain ATCC 29096 / DSM 1053 / JCM 10044 / NBRC 100330 / Delta H) (Methanobacterium thermoautotrophicum)).